A 328-amino-acid chain; its full sequence is D-cysteine desulfhydrase (328 aa).

Position 51 is an N6-(pyridoxal phosphate)lysine (lysine 51).

Belongs to the ACC deaminase/D-cysteine desulfhydrase family. As to quaternary structure, homodimer. The cofactor is pyridoxal 5'-phosphate.

The enzyme catalyses D-cysteine + H2O = hydrogen sulfide + pyruvate + NH4(+) + H(+). Catalyzes the alpha,beta-elimination reaction of D-cysteine and of several D-cysteine derivatives. It could be a defense mechanism against D-cysteine. The polypeptide is D-cysteine desulfhydrase (Salmonella typhi).